The primary structure comprises 207 residues: NAD(P)H-quinone oxidoreductase subunit K, chloroplastic (207 aa).

Residues Cys-47, Cys-48, Cys-112, and Cys-143 each coordinate [4Fe-4S] cluster.

It belongs to the complex I 20 kDa subunit family. As to quaternary structure, NDH is composed of at least 16 different subunits, 5 of which are encoded in the nucleus. Requires [4Fe-4S] cluster as cofactor.

It localises to the plastid. The protein resides in the chloroplast thylakoid membrane. It catalyses the reaction a plastoquinone + NADH + (n+1) H(+)(in) = a plastoquinol + NAD(+) + n H(+)(out). The enzyme catalyses a plastoquinone + NADPH + (n+1) H(+)(in) = a plastoquinol + NADP(+) + n H(+)(out). In terms of biological role, NDH shuttles electrons from NAD(P)H:plastoquinone, via FMN and iron-sulfur (Fe-S) centers, to quinones in the photosynthetic chain and possibly in a chloroplast respiratory chain. The immediate electron acceptor for the enzyme in this species is believed to be plastoquinone. Couples the redox reaction to proton translocation, and thus conserves the redox energy in a proton gradient. The polypeptide is NAD(P)H-quinone oxidoreductase subunit K, chloroplastic (Psilotum nudum (Whisk fern)).